The following is a 990-amino-acid chain: Fibronectin-binding protein A (990 aa).

The first 35 residues, 1–35 (MKNNLRYGIRKHKLGAASVFLGTMIVVGMGQDKEA), serve as a signal peptide directing secretion. Positions 7 to 18 (YGIRKHKLGAAS) match the YSIRK-G/S signaling motif motif. 2 disordered regions span residues 33-61 (KEAA…SETQ) and 96-193 (PKAV…TEVK). Positions 37–55 (TSEQKTTTVEENGNSATDN) are enriched in polar residues. The ligand-binding A region stretch occupies residues 37 to 511 (TSEQKTTTVE…SNKADGNGKN (475 aa)). 2 stretches are compositionally biased toward basic and acidic residues: residues 112 to 126 (TVKE…KPQV) and 179 to 193 (DVAE…TEVK). The fibrinogen/elastin/tropoelastin-binding stretch occupies residues 194 to 511 (GTDVTSKVTV…SNKADGNGKN (318 aa)). The segment at 512–834 (GQIIQNNDFE…EGQQTIEEDT (323 aa)) is fibronectin-binding. Residues 545–574 (ENQDNTPLDIDYHTAIDGEGGYADGYIETI) form a B-1 repeat. The interval 545–604 (ENQDNTPLDIDYHTAIDGEGGYADGYIETIEETDSSAIDIDYHTAVDSEAGHVGGYTESS) is 2 X approximate tandem repeats. The B-2 repeat unit spans residues 575–604 (EETDSSAIDIDYHTAVDSEAGHVGGYTESS). The segment at 702–969 (LGYEGGQNSG…EESTNKGMLF (268 aa)) is disordered. The stretch at 707–744 (GQNSGNQSFEEDTEEDKPKYEQGGNIVDIDFDSVPQIQ) is one D-1 repeat. Residues 707 to 850 (GQNSGNQSFE…TPEVPSEPET (144 aa)) are 4 X approximate tandem repeats. Residues 741 to 752 (PQIQGQNNGNQS) are compositionally biased toward polar residues. The stretch at 745–782 (GQNNGNQSFEEDTEKDKPKYEQGGNIIDIDFDSVPQIH) is one D-2 repeat. The stretch at 783-821 (GFNKHNEIIEEDTNKDKPNYQFGGHNSVDFEEDTLPKVS) is one D-3 repeat. The span at 786 to 800 (KHNEIIEEDTNKDKP) shows a compositional bias: basic and acidic residues. The D-4; truncated repeat unit spans residues 822–850 (GQNEGQQTIEEDTTPPTPPTPEVPSEPET). Residues 836–910 (PPTPPTPEVP…PAEPGKPVPP (75 aa)) show a composition bias toward pro residues. WR repeat units follow at residues 851–864 (PTPP…EPET), 865–878 (PTPP…EPET), 879–892 (PTPP…EPET), 893–906 (PTPP…EPGK), and 907–920 (PVPP…KPSK). Residues 851-920 (PTPPTPEVPS…AEEEPKKPSK (70 aa)) are 5 X tandem repeats, Pro-rich (WR). The LPXTG sorting signal motif lies at 954–958 (LPETG). Thr-957 is modified (pentaglycyl murein peptidoglycan amidated threonine). The propeptide at 958-990 (GGEESTNKGMLFGGLFSILGLALLRRNKKNHKA) is removed by sortase.

It localises to the secreted. The protein resides in the cell wall. Promotes bacterial attachment to multiple substrates, such as fibronectin (Fn), fibrinogen (Fg), elastin peptides and tropoelastin. This confers to S.aureus the ability to invade endothelial cells. Promotes adherence to and aggregation of activated platelets. The protein is Fibronectin-binding protein A (fnbA) of Staphylococcus aureus (strain bovine RF122 / ET3-1).